The following is a 764-amino-acid chain: FAST kinase domain-containing protein 5, mitochondrial (764 aa).

The N-terminal 27 residues, 1–27, are a transit peptide targeting the mitochondrion; sequence MAATLKSLKLLRYQAFCSPSAFGAVRS. Residues 68–94 form a disordered region; sequence IPTTSSARPGLEFSKTSSSKASTLQLG. Polar residues predominate over residues 81–93; sequence SKTSSSKASTLQL. The residue at position 95 (S95) is a Phosphoserine. K507 is subject to N6-acetyllysine. An RAP domain is found at 697–757; sequence LAIQFTNRNQ…RLEKLAFLHE (61 aa).

This sequence belongs to the FAST kinase family. In terms of assembly, found in a complex with GRSF1, DDX28, DHX30 and FASTKD2. Associates with the 12S mitochondrial rRNA (12S mt-rRNA).

It is found in the mitochondrion matrix. The protein localises to the mitochondrion nucleoid. Its function is as follows. Plays an important role in the processing of non-canonical mitochondrial mRNA precursors. This chain is FAST kinase domain-containing protein 5, mitochondrial (FASTKD5), found in Pongo abelii (Sumatran orangutan).